The following is a 221-amino-acid chain: Lipoprotein-releasing system ATP-binding protein LolD (221 aa).

The ABC transporter domain occupies 6–220; it reads LILKNISKHY…YKLKHGLLNI (215 aa). ATP is bound at residue 42–49; that stretch reads GSSGSGKS.

This sequence belongs to the ABC transporter superfamily. Lipoprotein translocase (TC 3.A.1.125) family. As to quaternary structure, the complex is composed of two ATP-binding proteins (LolD) and two transmembrane proteins (LolC and LolE).

It localises to the cell inner membrane. Part of the ABC transporter complex LolCDE involved in the translocation of mature outer membrane-directed lipoproteins, from the inner membrane to the periplasmic chaperone, LolA. Responsible for the formation of the LolA-lipoprotein complex in an ATP-dependent manner. The protein is Lipoprotein-releasing system ATP-binding protein LolD of Rickettsia felis (strain ATCC VR-1525 / URRWXCal2) (Rickettsia azadi).